Consider the following 1374-residue polypeptide: Ribonuclease 3 (1374 aa).

Disordered stretches follow at residues 1–95 (MMQG…PLPP), 130–406 (PPVP…EEEE), and 452–497 (LGSR…SSSS). Polar residues predominate over residues 59–68 (PSTTFSNSPA). Pro residues-rich tracts occupy residues 70-95 (NFLP…PLPP) and 145-160 (MMPP…PPVM). Residues 182–202 (FNSFQNNPSSFLPSANNSSSP) are compositionally biased toward low complexity. Basic and acidic residues-rich tracts occupy residues 216–289 (PSER…ERER) and 298–313 (RRSP…EYKR). 2 positions are modified to phosphoserine: S355 and S373. Residues 364 to 399 (RWEEEKDRWSDNQSSGKDKNYTSIKEKEPEETMPDK) show a composition bias toward basic and acidic residues. Positions 390-1365 (KEPEETMPDK…RWEREHQERE (976 aa)) are necessary for interaction with DGCR8 and pri-miRNA processing activity. Over residues 475–491 (EDLESSSESECESDEDS) the composition is skewed to acidic residues. Residues C536, C538, H549, C561, H609, C676, and H680 each coordinate Zn(2+). RNase III domains lie at 876 to 1056 (LMHL…LEGS) and 1107 to 1233 (LTEF…IDKD). E969 serves as a coordination point for Mg(2+). H1026 contributes to the Zn(2+) binding site. Mg(2+)-binding residues include N1042, E1045, E1147, D1219, and E1222. The DRBM domain maps to 1260–1334 (DPKSQLQQCC…AMDALEKYNF (75 aa)).

This sequence belongs to the ribonuclease III family. In terms of assembly, component of the microprocessor complex, or pri-miRNA processing protein complex, which is composed of DROSHA and DGCR8. The microprocessor complex is a heterotrimer; each of the two DROSHA RNase III domains binds one DGCR8 (via C-terminal region). Interacts with SP1 and SNIP1. Interacts with SRRT/ARS2. Interacts with CPSF3 and ISY1; this interaction is in an RNA dependent manner. Interacts with PUS10; interaction promotes pri-miRNAs processing. Mg(2+) serves as cofactor. It depends on Mn(2+) as a cofactor. Degraded by autophagy in response to neuronal activity in motor neurons. In terms of tissue distribution, ubiquitous.

It localises to the nucleus. It is found in the nucleolus. The protein localises to the cytoplasm. The catalysed reaction is Endonucleolytic cleavage to 5'-phosphomonoester.. Functionally, ribonuclease III double-stranded (ds) RNA-specific endoribonuclease that is involved in the initial step of microRNA (miRNA) biogenesis. Component of the microprocessor complex that is required to process primary miRNA transcripts (pri-miRNAs) to release precursor miRNA (pre-miRNA) in the nucleus. Within the microprocessor complex, DROSHA cleaves the 3' and 5' strands of a stem-loop in pri-miRNAs (processing center 11 bp from the dsRNA-ssRNA junction) to release hairpin-shaped pre-miRNAs that are subsequently cut by the cytoplasmic DICER to generate mature miRNAs. Involved also in pre-rRNA processing. Cleaves double-strand RNA and does not cleave single-strand RNA. Involved in the formation of GW bodies. Plays a role in growth homeostasis in response to autophagy in motor neurons. In Homo sapiens (Human), this protein is Ribonuclease 3 (DROSHA).